The following is a 189-amino-acid chain: Glutathione-dependent formaldehyde-activating enzyme (189 aa).

The CENP-V/GFA domain occupies 20-167 (FAGGTLVCKC…LKELGLEPYD (148 aa)). Zn(2+) contacts are provided by Cys-27, Cys-29, Cys-48, Cys-50, Cys-53, Cys-95, and Cys-98.

This sequence belongs to the Gfa family. The cofactor is Zn(2+).

It catalyses the reaction S-(hydroxymethyl)glutathione = glutathione + formaldehyde. It participates in one-carbon metabolism; formaldehyde degradation; formate from formaldehyde (glutathione route): step 1/3. Catalyzes the condensation of formaldehyde and glutathione to S-hydroxymethylglutathione. This chain is Glutathione-dependent formaldehyde-activating enzyme, found in Rhodopseudomonas palustris (strain BisB18).